A 351-amino-acid chain; its full sequence is Beta-hexosaminidase (351 aa).

Residues Asp-62, Arg-70, Arg-134, and 164-165 (KH) each bind substrate. His-177 (proton donor/acceptor) is an active-site residue. Asp-249 functions as the Nucleophile in the catalytic mechanism.

It belongs to the glycosyl hydrolase 3 family. NagZ subfamily.

The protein resides in the cytoplasm. It carries out the reaction Hydrolysis of terminal non-reducing N-acetyl-D-hexosamine residues in N-acetyl-beta-D-hexosaminides.. It participates in cell wall biogenesis; peptidoglycan recycling. In terms of biological role, plays a role in peptidoglycan recycling by cleaving the terminal beta-1,4-linked N-acetylglucosamine (GlcNAc) from peptide-linked peptidoglycan fragments, giving rise to free GlcNAc, anhydro-N-acetylmuramic acid and anhydro-N-acetylmuramic acid-linked peptides. This Histophilus somni (strain 129Pt) (Haemophilus somnus) protein is Beta-hexosaminidase.